Consider the following 373-residue polypeptide: Pectin lyase D (373 aa).

The N-terminal stretch at 1 to 19 (MKYAAALTAIAALAARAAA) is a signal peptide. Cystine bridges form between Cys-82–Cys-101 and Cys-91–Cys-225. A glycan (N-linked (GlcNAc...) asparagine) is linked at Asn-128. The active site involves Arg-255. A glycan (N-linked (GlcNAc...) asparagine) is linked at Asn-274. Cys-321 and Cys-329 are oxidised to a cystine. An N-linked (GlcNAc...) asparagine glycan is attached at Asn-348. The segment covering 354–366 (LPSADAASTSPAS) has biased composition (low complexity). The tract at residues 354–373 (LPSADAASTSPASNAGQGNL) is disordered.

It belongs to the polysaccharide lyase 1 family. Post-translationally, may be O-glycosylated; does not contain N-acetylglucosamine.

It localises to the secreted. The catalysed reaction is Eliminative cleavage of (1-&gt;4)-alpha-D-galacturonan methyl ester to give oligosaccharides with 4-deoxy-6-O-methyl-alpha-D-galact-4-enuronosyl groups at their non-reducing ends.. Pectinolytic enzymes consist of four classes of enzymes: pectin lyase, polygalacturonase, pectin methylesterase and rhamnogalacturonase. Among pectinolytic enzymes, pectin lyase is the most important in depolymerization of pectin, since it cleaves internal glycosidic bonds of highly methylated pectins. The chain is Pectin lyase D (pelD) from Aspergillus niger.